The sequence spans 166 residues: Large ribosomal subunit protein bL9 (166 aa).

Belongs to the bacterial ribosomal protein bL9 family.

Its function is as follows. Binds to the 23S rRNA. This Psychrobacter arcticus (strain DSM 17307 / VKM B-2377 / 273-4) protein is Large ribosomal subunit protein bL9.